The chain runs to 784 residues: Cadherin-5 (784 aa).

Positions 1 to 25 (MQRLMMLLATSGACLGLLAVAAVAA) are cleaved as a signal peptide. Residues 26-47 (AGANPAQRDTHSLLPTHRRQKR) constitute a propeptide that is removed on maturation. Cadherin domains lie at 48–151 (DWIW…WPVF), 152–258 (THRL…FPFF), 259–372 (TQTK…PPIF), 373–477 (QQPF…DNAP), and 478–593 (EFAK…MAAQ). The Extracellular portion of the chain corresponds to 48–599 (DWIWNQMHID…MAAQVGVSIQ (552 aa)). Ca(2+)-binding residues include Glu58 and Glu59. Asn61 carries N-linked (GlcNAc...) (complex) asparagine glycosylation. Ca(2+) contacts are provided by Asp109 and Glu111. Residue Asn112 is glycosylated (N-linked (GlcNAc...) (complex) asparagine). Ca(2+) is bound by residues Asp143, Val144, Asn145, Asp146, and Asn147. Asn157 carries an N-linked (GlcNAc...) asparagine glycan. Asp177, Asp179, His186, and Asp231 together coordinate Ca(2+). An N-linked (GlcNAc...) asparagine glycan is attached at Asn362. A glycan (N-linked (GlcNAc...) (complex) asparagine) is linked at Asn442. 2 N-linked (GlcNAc...) asparagine glycosylation sites follow: Asn523 and Asn535. Residues 600–620 (AVVAILLCILTITVITLLIFL) form a helical membrane-spanning segment. The interval 621–660 (RRRLRKQARAHGKSVPEIHEQLVTYDEEGGGEMDTTSYDV) is required for interaction with PALS1. The Cytoplasmic segment spans residues 621–784 (RRRLRKQARA…GSDPREELLY (164 aa)).

Part of a complex composed of AMOTL2, MAGI1 and CDH5, within the complex AMOTL2 acts as a scaffold protein for the interaction of MAGI1 with CDH5. The complex is required for coupling actin fibers to cell junctions in endothelial cells. Within the complex AMOTL2 (via its N-terminus) interacts with CDH5. Interacts (via cadherin 5 domain) with PTPRB. Interacts with TRPC4. Interacts with KRIT1. Interacts with PARD3. Interacts with RTN4 (isoform B). Interacts with PALS1; the interaction promotes PALS1 localization to cell junctions and is required for CDH5-mediated vascular lumen formation and endothelial cell. Interacts with CTNND1/p120-catenin; the interaction controls CADH5 endocytosis. Post-translationally, phosphorylated on tyrosine residues by KDR/VEGFR-2. Dephosphorylated by PTPRB. O-glycosylated. Expressed in endothelial cells (at protein level). Expressed in the brain.

The protein resides in the cell junction. Its subcellular location is the adherens junction. It is found in the cell membrane. It localises to the cytoplasm. Functionally, cadherins are calcium-dependent cell adhesion proteins. They preferentially interact with themselves in a homophilic manner in connecting cells; cadherins may thus contribute to the sorting of heterogeneous cell types. This cadherin may play a important role in endothelial cell biology through control of the cohesion and organization of the intercellular junctions. It associates with alpha-catenin forming a link to the cytoskeleton. Plays a role in coupling actin fibers to cell junctions in endothelial cells, via acting as a cell junctional complex anchor for AMOTL2 and MAGI1. Acts in concert with KRIT1 and PALS1 to establish and maintain correct endothelial cell polarity and vascular lumen. These effects are mediated by recruitment and activation of the Par polarity complex and RAP1B. Required for activation of PRKCZ and for the localization of phosphorylated PRKCZ, PARD3, TIAM1 and RAP1B to the cell junction. Associates with CTNND1/p120-catenin to control CADH5 endocytosis. This Homo sapiens (Human) protein is Cadherin-5.